Here is a 591-residue protein sequence, read N- to C-terminus: MSSLIMQVVIPKPAKFFHNNLFSLSSKRHRFSTTTTTRGGRWARCSLQTGNEIQTERRTGGYQPTLWDFSTIQSFDSEYKEEKHLMRAAGMIDQVKMMLQEEVDSIRRLELIDDLRRLGISCHFEREIVEILNSKYYTNNEIDERDLYSTALRFRLLRQYDFSVSQEVFDCFKNAKGTDFKPSLVDDTRGLLQLYEASFLSAQGEETLRLARDFATKFLQKRVLVDKDINLLSSIERALELPTHWRVQMPNARSFIDAYKRRPDMNPTVLELAKLDFNMVQAQFQQELKEASRWWNSTGLVHELPFVRDRIVECYYWTTGVVERRQHGYERIMLTKINALVTTIDDVFDIYGTLEELQLFTTAIQRWDIESMKQLPPYMQICYLALFNFVNEMAYDTLRDKGFDSTPYLRKVWVGLIESYLIEAKWYYKGHKPSLEEYMKNSWISIGGIPILSHLFFRLTDSIEEEAAESMHKYHDIVRASCTILRLADDMGTSLDEVERGDVPKSVQCYMNEKNASEEEAREHVRSLIDQTWKMMNKEMMTSSFSKYFVEVSANLARMAQWIYQHESDGFGMQHSLVNKMLRDLLFHRYE.

The transit peptide at 1–44 directs the protein to the chloroplast; it reads MSSLIMQVVIPKPAKFFHNNLFSLSSKRHRFSTTTTTRGGRWAR. The (2E)-geranyl diphosphate site is built by R308, D345, D349, R486, and D489. Mg(2+)-binding residues include D345 and D349. Residues 345 to 349 carry the DDXXD motif motif; the sequence is DDVFD. Mg(2+) is bound by residues D489, T493, and E497.

The protein belongs to the terpene synthase family. Tpsb subfamily. In terms of assembly, monomer. The cofactor is Mg(2+). Requires Mn(2+) as cofactor.

Its subcellular location is the plastid. It localises to the chloroplast. It carries out the reaction (2E)-geranyl diphosphate + H2O = 1,8-cineole + diphosphate. The enzyme catalyses (2E)-geranyl diphosphate = alpha-pinene + diphosphate. The catalysed reaction is (2E)-geranyl diphosphate = beta-pinene + diphosphate. It catalyses the reaction (2E)-geranyl diphosphate + H2O = (S)-alpha-terpineol + diphosphate. It carries out the reaction (2E)-geranyl diphosphate = beta-myrcene + diphosphate. The enzyme catalyses (2E)-geranyl diphosphate = sabinene + diphosphate. Its pathway is secondary metabolite biosynthesis; terpenoid biosynthesis. Functionally, monoterpene synthase (TPS) involved in the biosynthesis of monoterpene natural products, components of the chemical defense arsenal. Catalyzes the conversion of (2E)-geranyl diphosphate (GPP) into 1,8-cineole, and, as minor products, alpha-terpineol, beta-pinene, alpha-pinene, sabinene and myrcene. In Salvia fruticosa (Greek sage), this protein is Cineole synthase 1, chloroplastic.